The primary structure comprises 92 residues: MSTISRDSCPALRAGVRLQHDRARDQWVLLAPERVVELDDIALVVAQRYDGTQSLAEIAQTLATEFDADASEIETDVIELTTTLHQKRLLRL.

Belongs to the PqqD family. Monomer. Interacts with PqqE.

Its pathway is cofactor biosynthesis; pyrroloquinoline quinone biosynthesis. In terms of biological role, functions as a PqqA binding protein and presents PqqA to PqqE, in the pyrroloquinoline quinone (PQQ) biosynthetic pathway. This is PqqA binding protein from Xanthomonas campestris pv. campestris (strain B100).